The chain runs to 585 residues: Arginine--tRNA ligase (585 aa).

Positions 131–141 match the 'HIGH' region motif; sequence ANPTGPMHVGH.

The protein belongs to the class-I aminoacyl-tRNA synthetase family. In terms of assembly, monomer.

Its subcellular location is the cytoplasm. It carries out the reaction tRNA(Arg) + L-arginine + ATP = L-arginyl-tRNA(Arg) + AMP + diphosphate. The protein is Arginine--tRNA ligase of Agrobacterium fabrum (strain C58 / ATCC 33970) (Agrobacterium tumefaciens (strain C58)).